The sequence spans 51 residues: Light-harvesting protein B-800/850 beta chain (51 aa).

The Cytoplasmic segment spans residues 2-23 (ADDANKVWPSGLTTAEAEELQK). The helical transmembrane segment at 24 to 46 (GLVDGTRVFGVIAVLAHILAYAY) threads the bilayer. Position 40 (H40) interacts with a bacteriochlorophyll. Residues 47 to 51 (TPWLH) are Periplasmic-facing.

Belongs to the antenna complex beta subunit family. As to quaternary structure, an alpha/beta heterodimer conjugated to 3 bacteriochlorophyll molecules. The core complex is formed by different alpha and beta chains, binding bacteriochlorophyll molecules, and arranged most probably in tetrameric structures disposed around the reaction center. The non-pigmented gamma chains may constitute additional components.

The protein localises to the cell inner membrane. Antenna complexes are light-harvesting systems, which transfer the excitation energy to the reaction centers. This is Light-harvesting protein B-800/850 beta chain (pucB) from Rubrivivax gelatinosus (Rhodocyclus gelatinosus).